The primary structure comprises 837 residues: E3 ubiquitin-protein ligase bre-1 (837 aa).

The tract at residues 1–33 (MMKRSNEGIGGENYASSPSDDGQQKRRKIQFEP) is disordered. The interaction with ubc-1 stretch occupies residues 1-313 (MMKRSNEGIG…AKEIENLRLE (313 aa)). Coiled-coil stretches lie at residues 54 to 89 (TSKLKQQLLYKNKRIAELEKENERSKRRQQTDESNF) and 185 to 253 (HKEL…KHMR). The segment at 269–302 (GQSGGNGGATPSSSGTTNATEKKISAPDIPPSET) is disordered. Positions 277–287 (ATPSSSGTTNA) are enriched in polar residues. Coiled-coil stretches lie at residues 300–397 (SETA…AFRS), 458–651 (DEMK…KAQT), and 677–763 (VQFK…NESV). Residues 785–824 (CPSCKTRPKDCIMLKCYHLFCETCIKTMYDTRQRKCPKCN) form an RING-type zinc finger.

This sequence belongs to the BRE1 family. In terms of assembly, interacts with ubc-1. Interacts with mrg-1. In adult animals, expressed in oocytes, germ cells, pharyngeal and intestinal cells.

It localises to the nucleus. The catalysed reaction is S-ubiquitinyl-[E2 ubiquitin-conjugating enzyme]-L-cysteine + [acceptor protein]-L-lysine = [E2 ubiquitin-conjugating enzyme]-L-cysteine + N(6)-ubiquitinyl-[acceptor protein]-L-lysine.. Its pathway is protein modification; protein ubiquitination. In terms of biological role, E3 ubiquitin-protein ligase that mediates monoubiquitination of 'Lys-117' of histone H2B. H2B 'Lys-117' ubiquitination gives a specific tag for epigenetic transcriptional activation and is also prerequisite for histone H3 'Lys-4' and 'Lys-79' methylation. Involved in regulating stem cell proliferative fate. This chain is E3 ubiquitin-protein ligase bre-1 (rfp-1), found in Caenorhabditis elegans.